Here is a 377-residue protein sequence, read N- to C-terminus: Alanine racemase (377 aa).

The Proton acceptor; specific for D-alanine role is filled by lysine 37. Lysine 37 carries the N6-(pyridoxal phosphate)lysine modification. A substrate-binding site is contributed by arginine 135. The Proton acceptor; specific for L-alanine role is filled by tyrosine 271. Substrate is bound at residue methionine 319.

Belongs to the alanine racemase family. Requires pyridoxal 5'-phosphate as cofactor.

It catalyses the reaction L-alanine = D-alanine. It participates in amino-acid biosynthesis; D-alanine biosynthesis; D-alanine from L-alanine: step 1/1. In terms of biological role, catalyzes the interconversion of L-alanine and D-alanine. May also act on other amino acids. In Helicobacter pylori (strain J99 / ATCC 700824) (Campylobacter pylori J99), this protein is Alanine racemase (alr).